The following is a 459-amino-acid chain: Glutamyl-tRNA reductase (459 aa).

Residues Thr49–Arg52, Ser109, Glu114–Gln116, and Gln120 each bind substrate. Residue Cys50 is the Nucleophile of the active site. Residue Gly189–Gly194 coordinates NADP(+).

The protein belongs to the glutamyl-tRNA reductase family. As to quaternary structure, homodimer.

It carries out the reaction (S)-4-amino-5-oxopentanoate + tRNA(Glu) + NADP(+) = L-glutamyl-tRNA(Glu) + NADPH + H(+). It participates in porphyrin-containing compound metabolism; protoporphyrin-IX biosynthesis; 5-aminolevulinate from L-glutamyl-tRNA(Glu): step 1/2. Its function is as follows. Catalyzes the NADPH-dependent reduction of glutamyl-tRNA(Glu) to glutamate 1-semialdehyde (GSA). This Mycolicibacterium paratuberculosis (strain ATCC BAA-968 / K-10) (Mycobacterium paratuberculosis) protein is Glutamyl-tRNA reductase.